The primary structure comprises 232 residues: Orotidine 5'-phosphate decarboxylase (232 aa).

Residues Asp13, Lys35, 62–71 (DLKFHDIPNT), Thr121, Arg182, Gln191, Gly211, and Arg212 each bind substrate. Lys64 acts as the Proton donor in catalysis.

The protein belongs to the OMP decarboxylase family. Type 1 subfamily. Homodimer.

The catalysed reaction is orotidine 5'-phosphate + H(+) = UMP + CO2. The protein operates within pyrimidine metabolism; UMP biosynthesis via de novo pathway; UMP from orotate: step 2/2. Catalyzes the decarboxylation of orotidine 5'-monophosphate (OMP) to uridine 5'-monophosphate (UMP). This Teredinibacter turnerae (strain ATCC 39867 / T7901) protein is Orotidine 5'-phosphate decarboxylase.